The following is a 252-amino-acid chain: Transcriptional regulatory protein HptR (252 aa).

The 116-residue stretch at 3 to 118 folds into the Response regulatory domain; the sequence is KVVICDDERI…QLEVILGRLV (116 aa). Asp55 carries the 4-aspartylphosphate modification. The 98-residue stretch at 153–250 folds into the HTH araC/xylS-type domain; sequence NQIVDQIKQS…QMAPSDYCKQ (98 aa). 2 consecutive DNA-binding regions (H-T-H motif) follow at residues 170 to 191 and 217 to 240; these read SDLI…KDHV and HYEI…KKYL.

Post-translationally, phosphorylated by HptS.

It localises to the cytoplasm. Functionally, member of the two-component regulatory system HptS/HptR that regulates genes involved in hexose phosphate transport system in response to changes in extracellular phosphate sources. Activates uhpT expression to facilitate glucose-6-phosphate/G6P utilization by directly binding to its promoter. Antagonizes CcpA-dependent transcription of a subset of CcpA-regulated genes involved in antibiotic susceptibility. The chain is Transcriptional regulatory protein HptR (hptR) from Staphylococcus aureus (strain bovine RF122 / ET3-1).